Consider the following 429-residue polypeptide: Histidinol dehydrogenase (429 aa).

Residues Tyr130, Gln191, and Asn214 each coordinate NAD(+). Substrate-binding residues include Ser237, Gln259, and His262. Residues Gln259 and His262 each contribute to the Zn(2+) site. Active-site proton acceptor residues include Glu327 and His328. Residues His328, Asp361, Glu415, and His420 each coordinate substrate. Asp361 contributes to the Zn(2+) binding site. Residue His420 coordinates Zn(2+).

It belongs to the histidinol dehydrogenase family. The cofactor is Zn(2+).

It carries out the reaction L-histidinol + 2 NAD(+) + H2O = L-histidine + 2 NADH + 3 H(+). It functions in the pathway amino-acid biosynthesis; L-histidine biosynthesis; L-histidine from 5-phospho-alpha-D-ribose 1-diphosphate: step 9/9. In terms of biological role, catalyzes the sequential NAD-dependent oxidations of L-histidinol to L-histidinaldehyde and then to L-histidine. This Neisseria gonorrhoeae (strain ATCC 700825 / FA 1090) protein is Histidinol dehydrogenase.